The primary structure comprises 1261 residues: SNF2 domain-containing protein CLASSY 2 (1261 aa).

The interval 458 to 479 is disordered; that stretch reads FQKRTSRSSRSVAPKTEDSDEP. The Helicase ATP-binding domain maps to 704 to 904; that stretch reads DPTSGNIGGC…FNTLCLARPK (201 aa). 717–724 is a binding site for ATP; the sequence is HSPGAGKT. A DEAH box motif is present at residues 855 to 858; that stretch reads DEGH. One can recognise a Helicase C-terminal domain in the interval 1067–1232; sequence FVLNLIFRVV…DPSLWQAEKI (166 aa).

The protein belongs to the helicase family. Interacts with NRPD1 and SHH1.

It localises to the nucleus. Probable chromatin remodeling factor. This is SNF2 domain-containing protein CLASSY 2 (CLSY2) from Arabidopsis thaliana (Mouse-ear cress).